Here is a 557-residue protein sequence, read N- to C-terminus: Iron-sulfur cluster assembly SufBD family protein ABCI8, chloroplastic (557 aa).

The disordered stretch occupies residues 1–47 (MASLLANGISSFSPQPTSDSSKSPKGFHPKPESLKFPSPKSLNPTRP). The transit peptide at 1 to 52 (MASLLANGISSFSPQPTSDSSKSPKGFHPKPESLKFPSPKSLNPTRPIFKLR) directs the protein to the chloroplast. Over residues 10–24 (SSFSPQPTSDSSKSP) the composition is skewed to low complexity.

It belongs to the iron-sulfur cluster assembly SufBD family.

The protein resides in the plastid. It localises to the chloroplast. Involved in light signaling, probably by mediating the transport and correct distribution of protoporphyrin IX, a chlorophyll precursor, in response to far-red light. This chain is Iron-sulfur cluster assembly SufBD family protein ABCI8, chloroplastic (ABCI8), found in Arabidopsis thaliana (Mouse-ear cress).